Reading from the N-terminus, the 1259-residue chain is Ankyrin repeat and sterile alpha motif domain-containing protein 1B (1259 aa).

ANK repeat units follow at residues 2-31 (GKDQ…GGIL), 58-87 (SGYT…STNV), 91-120 (KGYF…SHSR), 127-156 (ENET…DPTI), 160-189 (KLET…NLMS), 193-222 (RKHT…DVSC), and 225-254 (EKGS…DANI). The disordered stretch occupies residues 298–325 (HAQEDTAQETHLSSPAESPQKTKSETVT). Residues 306–325 (ETHLSSPAESPQKTKSETVT) show a composition bias toward polar residues. Phosphoserine is present on residues Ser-310, Ser-311, Ser-315, Ser-353, and Ser-364. 4 disordered regions span residues 367-401 (ELGK…SCGP), 490-513 (PGTS…SPDT), 556-614 (CTSF…GSSP), and 631-661 (TCED…EPSV). Residues 371–384 (NGSQSVRTSSTINL) show a composition bias toward polar residues. Thr-503 is modified (phosphothreonine). Phosphoserine occurs at positions 507 and 510. Over residues 556–574 (CTSFTSSPAASPPTSSVET) the composition is skewed to low complexity. The segment covering 575-587 (TEVKNEGAEHADD) has biased composition (basic and acidic residues). Residue Ser-738 is modified to Phosphoserine. The disordered stretch occupies residues 753–776 (VNWSKSSTAERSSKDNSERTPSFT). Thr-772 carries the phosphothreonine modification. Position 774 is a phosphoserine (Ser-774). SAM domains lie at 809–875 (CPVQ…LPKM) and 883–948 (YHPT…RLHD). Tyr-900 bears the Phosphotyrosine mark. A short sequence motif (nuclear localization signal) is located at residue His-934. The disordered stretch occupies residues 943–988 (GDRLHDDPPQKPPRSITLREPSGNHTPPQLSPSLSQSTYTTGGSLD). Positions 968 to 983 (TPPQLSPSLSQSTYTT) are enriched in low complexity. Residue Ser-973 is modified to Phosphoserine. Tyr-1006 is modified (phosphotyrosine). The PID domain occupies 1055–1212 (IFQSCDYKAF…SFENKPSKPI (158 aa)). Positions 1196-1216 (HSSTLPESFENKPSKPIPKPR) are disordered.

As to quaternary structure, interacts with EPHA8. Isoform 2 interacts with COIL.

The protein localises to the cytoplasm. Its subcellular location is the nucleus. It is found in the postsynaptic density. It localises to the cell projection. The protein resides in the dendritic spine. Its function is as follows. Isoform 2 may participate in the regulation of nucleoplasmic coilin protein interactions in neuronal and transformed cells. The polypeptide is Ankyrin repeat and sterile alpha motif domain-containing protein 1B (Anks1b) (Mus musculus (Mouse)).